A 719-amino-acid polypeptide reads, in one-letter code: Cyclin-dependent kinase 11.1 (719 aa).

3 stretches are compositionally biased toward basic and acidic residues: residues 1–20, 38–48, and 78–129; these read MSDH…ESHK, KGLESKMRESI, and KAKE…DQKV. Disordered regions lie at residues 1–215 and 231–315; these read MSDH…KDDD and EEKE…EMTE. Residues 130-140 show a composition bias toward basic residues; sequence HEHRHHHHHRK. Residues 141-163 are compositionally biased toward basic and acidic residues; that stretch reads HETDGHRTNRSNRDRSSERDSEK. A compositionally biased stretch (basic residues) spans 164 to 174; the sequence is HKRHIDRHKKS. 2 stretches are compositionally biased toward basic and acidic residues: residues 191–215 and 264–274; these read HTDV…KDDD and DDTKPKSPGKA. A compositionally biased stretch (acidic residues) spans 275–285; that stretch reads EDDDDVIEVLD. One can recognise a Protein kinase domain in the interval 356-647; it reads YECVNRVDEG…ATQALDHEWF (292 aa). Residues 362 to 370 and Lys385 each bind ATP; that span reads VDEGTFGVV. Asp484 acts as the Proton acceptor in catalysis. The segment at 657–689 is disordered; sequence EEFPTFPAKSEQNKAPPPAKQKQQENRISHVDP. The segment covering 678–689 has biased composition (basic and acidic residues); it reads KQQENRISHVDP.

Belongs to the protein kinase superfamily. CMGC Ser/Thr protein kinase family. CDC2/CDKX subfamily. As to expression, broadly expressed in somatic and germ line cells (at protein level). Not expressed in sperm (at protein level).

The protein localises to the nucleus. It carries out the reaction L-seryl-[protein] + ATP = O-phospho-L-seryl-[protein] + ADP + H(+). The catalysed reaction is L-threonyl-[protein] + ATP = O-phospho-L-threonyl-[protein] + ADP + H(+). In terms of biological role, probable cyclin-dependent kinase whose activity is most likely regulated by the cyclin cyl-1/Cylin-L. Important for normal oocyte and sperm development; probably required during multiple stages of gametogenesis. Plays a role in the activation of RAS-ERK signaling in the germ line. Also acts partially redundantly with cdk-11.2 to ensure embryonic viability. The polypeptide is Cyclin-dependent kinase 11.1 (Caenorhabditis elegans).